A 374-amino-acid polypeptide reads, in one-letter code: MLDFCASQPLTLGVELELMIVNRHDYNLTRGSDDLLRLIGREDHGFDIKPEITQGMIEIGTAIHTRTRAMLEELDAIRAVLVRAADTLNLGLAGGGAHPFQHWSEQRIYPKERYLLVSELYGYLAQQFTVYGQHIHIGCPDGDQAIRLAHFLARYIPHFIALSAASPYYQGVDTLFQSSRLTSVNAFPLSGTLPCVTDWAGFNDYFVRMQQLGIVASMKDFYWDVRPKPEYGTVEIRVCDTPLDLLTPVLLAAYAQMLARECMESGWQAIHSDNYLAYSYNRFQACRFGFEGLILNPADNGQVSLQQDLVTTLTRLEPQAAALGCEAERQQLLARALARDNPSRQLRTLYERSGSLNDLVRRQSAVWMRDAATL.

It belongs to the glutamate--cysteine ligase type 2 family. YbdK subfamily.

The catalysed reaction is L-cysteine + L-glutamate + ATP = gamma-L-glutamyl-L-cysteine + ADP + phosphate + H(+). In terms of biological role, ATP-dependent carboxylate-amine ligase which exhibits weak glutamate--cysteine ligase activity. The polypeptide is Putative glutamate--cysteine ligase 2 (Laribacter hongkongensis (strain HLHK9)).